A 233-amino-acid chain; its full sequence is MVEVVSVREHDRWRGVYVVELEDGSLRIATKNLVPGQRVYGERIFRYNGEEYREWNAYRSKLAAALLKGLIELPVKEGDRILYLGIASGTTASHMSDIIGPRGRIYGVEFAPRVMRDLLTVVRDRRNIFPILGDARFPEKYRHLVEGVDGLYADVAQPEQAAIVVRNARFFLRDGGYMLMAIKARSIDVTTEPSEVYKREIKTLMDGGLEIKDVVHLDPFDRDHAMIYAVMRR.

S-adenosyl-L-methionine-binding positions include 90–91 (TT), 109–110 (EF), 134–135 (DA), and 154–157 (DVAQ).

The protein belongs to the methyltransferase superfamily. Fibrillarin family. As to quaternary structure, interacts with nop5. Component of box C/D small ribonucleoprotein (sRNP) particles that contain rpl7ae, FlpA and nop5, plus a guide RNA.

Functionally, involved in pre-rRNA and tRNA processing. Utilizes the methyl donor S-adenosyl-L-methionine to catalyze the site-specific 2'-hydroxyl methylation of ribose moieties in rRNA and tRNA. Site specificity is provided by a guide RNA that base pairs with the substrate. Methylation occurs at a characteristic distance from the sequence involved in base pairing with the guide RNA. The protein is Fibrillarin-like rRNA/tRNA 2'-O-methyltransferase of Aeropyrum pernix (strain ATCC 700893 / DSM 11879 / JCM 9820 / NBRC 100138 / K1).